The primary structure comprises 1429 residues: uncharacterized protein (1429 aa).

2 disordered regions span residues 1–76 (MEGE…SGIE) and 103–130 (PAGAAESAQNANLISSKSENVPEPAGEK). The segment covering 14 to 29 (SHSTSVVSERASSSGV) has biased composition (low complexity). Residues 109 to 121 (SAQNANLISSKSE) are compositionally biased toward polar residues. A run of 2 helical transmembrane segments spans residues 197–217 (LTGQWWQSTSILLAVSILSWI) and 225–245 (FFILFFIIITGTIVYGSCMIS). The region spanning 266–471 (DYETMSWFNT…WPNMFDYDLS (206 aa)) is the SMP-LTD domain. C2 domains are found at residues 462-584 (WPNM…GDIY) and 738-858 (TPVD…DRSA). The disordered stretch occupies residues 899–932 (NTDNSSKQSSENVQSATDPTTPAKDNSTSNAETS). The C2 3 domain maps to 1060-1177 (TYMPVPMTLN…EPNVESQQSI (118 aa)). The interval 1280-1303 (EKNPSRSDLTTTQEASSSASVPPA) is disordered. The segment covering 1294–1303 (ASSSASVPPA) has biased composition (low complexity).

It is found in the membrane. This is an uncharacterized protein from Schizosaccharomyces pombe (strain 972 / ATCC 24843) (Fission yeast).